The chain runs to 545 residues: ATP synthase subunit alpha (545 aa).

ATP is bound at residue 173-180 (GDRQTGKT).

The protein belongs to the ATPase alpha/beta chains family. As to quaternary structure, F-type ATPases have 2 components, CF(1) - the catalytic core - and CF(0) - the membrane proton channel. CF(1) has five subunits: alpha(3), beta(3), gamma(1), delta(1), epsilon(1). CF(0) has three main subunits: a(1), b(2) and c(9-12). The alpha and beta chains form an alternating ring which encloses part of the gamma chain. CF(1) is attached to CF(0) by a central stalk formed by the gamma and epsilon chains, while a peripheral stalk is formed by the delta and b chains.

The protein resides in the cell membrane. The catalysed reaction is ATP + H2O + 4 H(+)(in) = ADP + phosphate + 5 H(+)(out). Functionally, produces ATP from ADP in the presence of a proton gradient across the membrane. The alpha chain is a regulatory subunit. This Clavibacter michiganensis subsp. michiganensis (strain NCPPB 382) protein is ATP synthase subunit alpha.